The sequence spans 101 residues: Cilia- and flagella-associated protein 141 (101 aa).

As to quaternary structure, microtubule inner protein component of sperm flagellar doublet microtubules. Expressed in trachea multiciliated cells.

It is found in the cytoplasm. The protein resides in the cytoskeleton. Its subcellular location is the cilium axoneme. It localises to the flagellum axoneme. Its function is as follows. Microtubule inner protein (MIP) part of the dynein-decorated doublet microtubules (DMTs) in cilia axoneme, which is required for motile cilia beating. This chain is Cilia- and flagella-associated protein 141, found in Bos taurus (Bovine).